The chain runs to 75 residues: Large ribosomal subunit protein bL31 (75 aa).

Belongs to the bacterial ribosomal protein bL31 family. Type A subfamily. Part of the 50S ribosomal subunit.

Its function is as follows. Binds the 23S rRNA. This Chlorobaculum tepidum (strain ATCC 49652 / DSM 12025 / NBRC 103806 / TLS) (Chlorobium tepidum) protein is Large ribosomal subunit protein bL31.